A 373-amino-acid polypeptide reads, in one-letter code: Mating-type protein A-2 (373 aa).

Positions 1–22 (MNLLNMQPKRSEQPAMFEENRA) are disordered.

This sequence to P.anserina SMR1.

Its function is as follows. Required, together with mating-type protein A-3, for efficient ascospore formation. In Neurospora crassa (strain ATCC 24698 / 74-OR23-1A / CBS 708.71 / DSM 1257 / FGSC 987), this protein is Mating-type protein A-2 (matA-2).